The sequence spans 560 residues: Nuclear hormone receptor family member nhr-8 (560 aa).

The tract at residues 1 to 21 (MPSSSPSMDESRRSAVPPKEP) is disordered. The segment at residues 23–98 (GRICTVCSDR…VGMNSEWLND (76 aa)) is a DNA-binding region (nuclear receptor). NR C4-type zinc fingers lie at residues 26 to 46 (CTVC…CESC) and 62 to 86 (CPFS…LNKC). Residues 336-560 (DEITLLEELH…PLIRELCSFE (225 aa)) enclose the NR LBD domain.

This sequence belongs to the nuclear hormone receptor family.

The protein resides in the nucleus. Functionally, orphan nuclear receptor. The polypeptide is Nuclear hormone receptor family member nhr-8 (nhr-8) (Caenorhabditis elegans).